A 237-amino-acid chain; its full sequence is B3 domain-containing protein Os03g0184500 (237 aa).

The segment at residues 137–228 (FVKPMLHSHV…TFKVHIIRAT (92 aa)) is a DNA-binding region (TF-B3).

It is found in the nucleus. The polypeptide is B3 domain-containing protein Os03g0184500 (Oryza sativa subsp. japonica (Rice)).